Reading from the N-terminus, the 206-residue chain is Ion-translocating oxidoreductase complex subunit G (206 aa).

Residues 9–29 (GITLALFAAGSTGLTAVINQM) form a helical membrane-spanning segment. An FMN phosphoryl threonine modification is found at threonine 174.

It belongs to the RnfG family. In terms of assembly, the complex is composed of six subunits: RsxA, RsxB, RsxC, RsxD, RsxE and RsxG. It depends on FMN as a cofactor.

The protein localises to the cell inner membrane. Its function is as follows. Part of a membrane-bound complex that couples electron transfer with translocation of ions across the membrane. Required to maintain the reduced state of SoxR. The protein is Ion-translocating oxidoreductase complex subunit G of Salmonella typhimurium (strain LT2 / SGSC1412 / ATCC 700720).